We begin with the raw amino-acid sequence, 603 residues long: Protein US26 (603 aa).

Residues 496-513 (EEEDQEEDDTSDDDDQEK) show a composition bias toward acidic residues. Disordered stretches follow at residues 496–536 (EEED…GSLE) and 549–568 (AVAE…DTAQ). Positions 517–533 (NPQNNIGSLTRTPSSPG) are enriched in polar residues.

Belongs to the herpesviridae US22 family.

The protein is Protein US26 (US26) of Human cytomegalovirus (strain Merlin) (HHV-5).